The sequence spans 88 residues: Putative membrane protein insertion efficiency factor (88 aa).

The protein belongs to the UPF0161 family.

The protein resides in the cell inner membrane. Functionally, could be involved in insertion of integral membrane proteins into the membrane. The protein is Putative membrane protein insertion efficiency factor of Synechococcus sp. (strain CC9311).